The sequence spans 486 residues: Serine/threonine-protein kinase 4 (486 aa).

The region spanning 29–280 (FDVLEKLGEG…AIQLLQHPFV (252 aa)) is the Protein kinase domain. Residues 35–43 (LGEGSYGSV) and K58 contribute to the ATP site. D148 (proton acceptor) is an active-site residue. Residue T182 is modified to Phosphothreonine; by autocatalysis. Positions 288–324 (ILRDLINEAMDIKLKRQEAQQRELDQEDEENSEEDET) form a coiled coil. The tract at residues 305–332 (EAQQRELDQEDEENSEEDETDSGTMVRA) is disordered. Residues 312 to 325 (DQEDEENSEEDETD) show a composition bias toward acidic residues. The 48-residue stretch at 432 to 479 (YEFLKTWSVDELQRRLSALDPMMEQEIEEIRQKYQSKRQPILDAIEAK) folds into the SARAH domain.

The protein belongs to the protein kinase superfamily. STE Ser/Thr protein kinase family. STE20 subfamily. In terms of assembly, homodimer; mediated via the coiled-coil region. Requires Mg(2+) as cofactor. In terms of processing, proteolytically cleaved by caspase-3 during apoptosis at Asp-325 resulting in a 37 kDa form. Proteolytic cleavage results in kinase activation and nuclear translocation of the truncated form (MST1/N).

The protein localises to the cytoplasm. It localises to the nucleus. It carries out the reaction L-seryl-[protein] + ATP = O-phospho-L-seryl-[protein] + ADP + H(+). The catalysed reaction is L-threonyl-[protein] + ATP = O-phospho-L-threonyl-[protein] + ADP + H(+). Its activity is regulated as follows. The C-terminal non-catalytic region inhibits the kinase activity, the enzyme is activated by caspase-cleavage. Homodimerization and autophosphorylation of Thr-182 is also required for full activation. Functionally, stress-activated, pro-apoptotic kinase which, following caspase-cleavage, enters the nucleus and induces chromatin condensation followed by internucleosomal DNA fragmentation. Key component of the Hippo signaling pathway which plays a pivotal role in organ size control and tumor suppression by restricting proliferation and promoting apoptosis. The core of this pathway is composed of a kinase cascade wherein STK3/MST2 and STK4/MST1, in complex with its regulatory protein SAV1, phosphorylates and activates LATS1/2 in complex with its regulatory protein MOB1, which in turn phosphorylates and inactivates YAP1 oncoprotein and WWTR1/TAZ. Phosphorylation of YAP1 by LATS2 inhibits its translocation into the nucleus to regulate cellular genes important for cell proliferation, cell death, and cell migration. Phosphorylates 'Ser-14' of histone H2B (H2BS14ph) during apoptosis. Phosphorylates FOXO3 upon oxidative stress, which results in its nuclear translocation and cell death initiation. This Gallus gallus (Chicken) protein is Serine/threonine-protein kinase 4 (STK4).